Consider the following 127-residue polypeptide: Aspartate 1-decarboxylase (127 aa).

Catalysis depends on S25, which acts as the Schiff-base intermediate with substrate; via pyruvic acid. Residue S25 is modified to Pyruvic acid (Ser). T57 is a binding site for substrate. The Proton donor role is filled by Y58. 73–75 is a binding site for substrate; sequence GAA.

Belongs to the PanD family. As to quaternary structure, heterooctamer of four alpha and four beta subunits. The cofactor is pyruvate. In terms of processing, is synthesized initially as an inactive proenzyme, which is activated by self-cleavage at a specific serine bond to produce a beta-subunit with a hydroxyl group at its C-terminus and an alpha-subunit with a pyruvoyl group at its N-terminus.

Its subcellular location is the cytoplasm. The catalysed reaction is L-aspartate + H(+) = beta-alanine + CO2. It functions in the pathway cofactor biosynthesis; (R)-pantothenate biosynthesis; beta-alanine from L-aspartate: step 1/1. Catalyzes the pyruvoyl-dependent decarboxylation of aspartate to produce beta-alanine. This Bacillus subtilis (strain 168) protein is Aspartate 1-decarboxylase.